Here is a 139-residue protein sequence, read N- to C-terminus: Sec-independent protein translocase protein TatB (139 aa).

A helical transmembrane segment spans residues 1–21; sequence MFDIGFTELLLVGLVALMVLG. Residues 69–139 form a disordered region; that stretch reads LDLEREMKQS…PLRSDRPSEP (71 aa). Residues 80–95 show a composition bias toward pro residues; the sequence is MPPPASNPAATPPSPP.

It belongs to the TatB family. The Tat system comprises two distinct complexes: a TatABC complex, containing multiple copies of TatA, TatB and TatC subunits, and a separate TatA complex, containing only TatA subunits. Substrates initially bind to the TatABC complex, which probably triggers association of the separate TatA complex to form the active translocon.

The protein localises to the cell inner membrane. Its function is as follows. Part of the twin-arginine translocation (Tat) system that transports large folded proteins containing a characteristic twin-arginine motif in their signal peptide across membranes. Together with TatC, TatB is part of a receptor directly interacting with Tat signal peptides. TatB may form an oligomeric binding site that transiently accommodates folded Tat precursor proteins before their translocation. In Stutzerimonas stutzeri (strain A1501) (Pseudomonas stutzeri), this protein is Sec-independent protein translocase protein TatB.